The primary structure comprises 90 residues: MSRHVTVVLLLAIVLLLSSHMIHGQHWSYGLRPGGKREVESLQESYAEVPNEVSFTELQHLECSIPQNRISLVRDALMNWLEGENARKKI.

Positions 1-24 are cleaved as a signal peptide; sequence MSRHVTVVLLLAIVLLLSSHMIHG. Pyrrolidone carboxylic acid is present on Gln25. Gly34 is modified (glycine amide).

It belongs to the GnRH family. Forebrain.

It localises to the secreted. In terms of biological role, stimulates the secretion of gonadotropins. In Aquarana catesbeiana (American bullfrog), this protein is Progonadoliberin-1 (gnrh1).